We begin with the raw amino-acid sequence, 482 residues long: Arginine/ornithine antiporter (482 aa).

At 1-10 the chain is on the cytoplasmic side; sequence MSQESSQKLR. A helical membrane pass occupies residues 11 to 31; sequence LGALTALVVGSMIGGGIFSLP. Residues 32–40 are Periplasmic-facing; the sequence is QNMAASADV. A helical membrane pass occupies residues 41 to 61; the sequence is GAVLIGWAITAVGMLTLAFVF. At 62–100 the chain is on the cytoplasmic side; that stretch reads QTLANRKPELDGGVYAYAKAGFGDYMGFSSAWGYWISAW. Residues 101-121 traverse the membrane as a helical segment; it reads LGNVGYFVLLFSTLGYFFPIF. At 122–124 the chain is on the periplasmic side; that stretch reads GKG. The helical transmembrane segment at 125–145 threads the bilayer; that stretch reads DTVAAIVCASVLLWALHFLVL. At 146-156 the chain is on the cytoplasmic side; the sequence is RGIKEAAFINT. The helical transmembrane segment at 157–177 threads the bilayer; that stretch reads VTTVAKVVPLFLFILICLFAF. Over 178 to 202 the chain is Periplasmic; sequence KLDIFTADIWGKSNPDLGSVMNQVR. The helical transmembrane segment at 203 to 223 threads the bilayer; that stretch reads NMMLVTVWVFIGIEGASIFSS. The Cytoplasmic portion of the chain corresponds to 224 to 235; the sequence is RAEKRSDVGKAT. A helical membrane pass occupies residues 236–256; that stretch reads VIGFITVLLLLVLVNVLSMGV. Residues 257 to 283 lie on the Periplasmic side of the membrane; the sequence is MTQPELAKLQNPSMALVLEHVVGHWGA. A helical membrane pass occupies residues 284–304; it reads VLISVGLLISLLGALLSWVLL. The Cytoplasmic portion of the chain corresponds to 305 to 333; the sequence is CAEIMFAAAKDHTMPEFLRRENANQVPAN. Residues 334–354 traverse the membrane as a helical segment; the sequence is ALWLTNICVQVFLVVVFFTSG. The Periplasmic segment spans residues 355–365; sequence DPDGMDPYTKM. The helical transmembrane segment at 366–386 threads the bilayer; it reads LLLATSMILIPYFWSAAYGLL. The Cytoplasmic segment spans residues 387 to 403; the sequence is LTLKGETYENDARERSK. Residues 404–424 form a helical membrane-spanning segment; sequence DLVIAGIAVAYAVWLLYAGGL. Position 425 (Lys-425) is a topological domain, periplasmic. A helical membrane pass occupies residues 426–446; it reads YLLLSALLYAPGAILFAKAKH. Over 447–458 the chain is Cytoplasmic; sequence EVGQPIFTGIEK. Residues 459-479 form a helical membrane-spanning segment; that stretch reads LIFAAVVIGALVAAYGLYDGF. Over 480 to 482 the chain is Periplasmic; it reads LTL.

It belongs to the amino acid-polyamine-organocation (APC) superfamily. Basic amino acid/polyamine antiporter (APA) (TC 2.A.3.2) family.

The protein localises to the cell inner membrane. The catalysed reaction is L-ornithine(in) + L-arginine(out) = L-ornithine(out) + L-arginine(in). Catalyzes electroneutral exchange between arginine and ornithine to allow high-efficiency energy conversion in the arginine deiminase pathway. Also mediates the proton motive force-driven uptake of arginine and ornithine, but the exchange is several orders of magnitude faster than the proton motive force-driven transport. This chain is Arginine/ornithine antiporter, found in Pseudomonas aeruginosa (strain ATCC 15692 / DSM 22644 / CIP 104116 / JCM 14847 / LMG 12228 / 1C / PRS 101 / PAO1).